Consider the following 117-residue polypeptide: UPF0127 protein PYRAB11210 (117 aa).

This sequence belongs to the UPF0127 family.

The sequence is that of UPF0127 protein PYRAB11210 from Pyrococcus abyssi (strain GE5 / Orsay).